Here is a 217-residue protein sequence, read N- to C-terminus: Peptide methionine sulfoxide reductase MsrA 1 (217 aa).

Cys57 is an active-site residue.

This sequence belongs to the MsrA Met sulfoxide reductase family.

It catalyses the reaction L-methionyl-[protein] + [thioredoxin]-disulfide + H2O = L-methionyl-(S)-S-oxide-[protein] + [thioredoxin]-dithiol. It carries out the reaction [thioredoxin]-disulfide + L-methionine + H2O = L-methionine (S)-S-oxide + [thioredoxin]-dithiol. In terms of biological role, has an important function as a repair enzyme for proteins that have been inactivated by oxidation. Catalyzes the reversible oxidation-reduction of methionine sulfoxide in proteins to methionine. The protein is Peptide methionine sulfoxide reductase MsrA 1 (msrA1) of Rhizobium meliloti (strain 1021) (Ensifer meliloti).